The chain runs to 186 residues: Probable chorismate pyruvate-lyase (186 aa).

Arginine 80, leucine 118, and glutamate 170 together coordinate substrate.

It belongs to the UbiC family.

The protein localises to the cytoplasm. The catalysed reaction is chorismate = 4-hydroxybenzoate + pyruvate. It functions in the pathway cofactor biosynthesis; ubiquinone biosynthesis. Removes the pyruvyl group from chorismate, with concomitant aromatization of the ring, to provide 4-hydroxybenzoate (4HB) for the ubiquinone pathway. This is Probable chorismate pyruvate-lyase from Pseudomonas syringae pv. tomato (strain ATCC BAA-871 / DC3000).